We begin with the raw amino-acid sequence, 504 residues long: Anaerobic nitric oxide reductase transcription regulator NorR (504 aa).

The residue at position 57 (aspartate 57) is a 4-aspartylphosphate. The 230-residue stretch at 187-416 (MIGLSPGMTQ…LEHAIHRAVV (230 aa)) folds into the Sigma-54 factor interaction domain. ATP-binding positions include 215–222 (GETGTGKE) and 278–287 (ADNGTLFLDE). The H-T-H motif DNA-binding region spans 479–498 (WAASARMLETDVANLHRLAK).

It functions in the pathway nitrogen metabolism; nitric oxide reduction. In terms of biological role, required for the expression of anaerobic nitric oxide (NO) reductase, acts as a transcriptional activator for at least the norVW operon. Activation also requires sigma-54. This Escherichia coli O7:K1 (strain IAI39 / ExPEC) protein is Anaerobic nitric oxide reductase transcription regulator NorR.